A 369-amino-acid polypeptide reads, in one-letter code: MYTKLRSIQSGTFSTVYKAWSTTHNRYVALKITPKYKTSEANMKNEYDVMKILSSCNPHPNICSMLDFYTDDSYYIMVLEYCECGDLYDFLDIAKSQGSPSSPSLIQIDMQKIIKQLCSAISFAHSLGIAHRDIKPENILLTINGDIKLADWGHAIQSPKSNDFQIGTDNYRAPETFSGRVSNSCFKKNFDRSSAPLYNTYQADYWSLGATIFYLMFGDCLFRVSKSKKVQHLKNFDEFEKDPFAFIYRKYVVPRLSCGYNDEEDLHVSLQHTRQYIWQDLPDIYDVFHLCKIMVDTLLKVSNAKERSMENFINEVDSAWNKDSSMDSCFSYQNKIDLFWEQWSVNTETVPAKFQLKNFEKPCLIQDGK.

In terms of domain architecture, Protein kinase spans 2–369 (YTKLRSIQSG…EKPCLIQDGK (368 aa)). Residues 8-16 (IQSGTFSTV) and lysine 31 contribute to the ATP site. The Proton acceptor role is filled by aspartate 133.

The protein belongs to the protein kinase superfamily. Ser/Thr protein kinase family.

The protein resides in the mitochondrion. It carries out the reaction L-seryl-[protein] + ATP = O-phospho-L-seryl-[protein] + ADP + H(+). It catalyses the reaction L-threonyl-[protein] + ATP = O-phospho-L-threonyl-[protein] + ADP + H(+). The chain is Probable serine/threonine-protein kinase FMP48 (FMP48) from Saccharomyces cerevisiae (strain ATCC 204508 / S288c) (Baker's yeast).